The primary structure comprises 790 residues: Nuclear cap-binding protein subunit 1 (790 aa).

The interval 1–26 (MSRRRHSDENDGGQPHKRRKTSDANE) is disordered. The short motif at 3-20 (RRRHSDENDGGQPHKRRK) is the Nuclear localization signal element. Position 7 is a phosphoserine; by RPS6KB1 (S7). T21 bears the Phosphothreonine; by RPS6KB1 mark. Residue S22 is modified to Phosphoserine; by RPS6KB1. The 213-residue stretch at 28 to 240 (EDHLESLICK…CLWAQIQKLK (213 aa)) folds into the MIF4G domain. Position 201 is a phosphoserine (S201). The residue at position 204 (K204) is an N6-acetyllysine. Positions 643–713 (STIRKMNKHV…SEQKNLFLVI (71 aa)) form a coiled coil. K684 participates in a covalent cross-link: Glycyl lysine isopeptide (Lys-Gly) (interchain with G-Cter in SUMO2). K698 carries the N6-acetyllysine modification.

The protein belongs to the NCBP1 family. Component of the nuclear cap-binding complex (CBC), a heterodimer composed of NCBP1/CBP80 and NCBP2/CBP20 that interacts with m7GpppG-capped RNA. Found in a U snRNA export complex containing PHAX/RNUXA, NCBP1/CBP80, NCBP2/CBP20, RAN, XPO1 and m7G-capped RNA. Identified in a IGF2BP1-dependent mRNP granule complex containing untranslated mRNAs. Interacts with PHAX/RNUXA, SRRT/ARS2, EIF4G2, IGF2BP1, HNRNPF, HNRNPH1, KIAA0427/CTIF, PARN, DROSHA, UPF1 and ALYREF/THOC4. May interact with EIF4G1; the interaction is however controversial since it is reported by PubMed:11340157, PubMed:15059963 and PubMed:15361857, but is not observed by PubMed:19648179. The large PER complex involved in the repression of transcriptional termination is composed of at least PER2, CDK9, DDX5, DHX9, NCBP1/CBP80 and POLR2A. Component of an alternative nuclear cap-binding complex (CBC) composed of NCBP1/CBP80 and NCBP3. Interacts with METTL3. Interacts with ZFC3H1 in a RNase-insensitive manner. Interacts with MTREX. Interacts with TASOR. Interacts with DHX34; the interaction is RNA-dependent. Interacts with KPNA3. Post-translationally, dephosphorylated at Thr-21 by the PNUTS-PP1 complex during RNA polymerase II transcription pause-release.

The protein resides in the nucleus. It localises to the cytoplasm. In terms of biological role, component of the cap-binding complex (CBC), which binds cotranscriptionally to the 5'-cap of pre-mRNAs and is involved in various processes such as pre-mRNA splicing, translation regulation, nonsense-mediated mRNA decay, RNA-mediated gene silencing (RNAi) by microRNAs (miRNAs) and mRNA export. The CBC complex is involved in mRNA export from the nucleus via its interaction with ALYREF/THOC4/ALY, leading to the recruitment of the mRNA export machinery to the 5'-end of mRNA and to mRNA export in a 5' to 3' direction through the nuclear pore. The CBC complex is also involved in mediating U snRNA and intronless mRNAs export from the nucleus. The CBC complex is essential for a pioneer round of mRNA translation, before steady state translation when the CBC complex is replaced by cytoplasmic cap-binding protein eIF4E. The pioneer round of mRNA translation mediated by the CBC complex plays a central role in nonsense-mediated mRNA decay (NMD), NMD only taking place in mRNAs bound to the CBC complex, but not on eIF4E-bound mRNAs. The CBC complex enhances NMD in mRNAs containing at least one exon-junction complex (EJC) via its interaction with UPF1, promoting the interaction between UPF1 and UPF2. The CBC complex is also involved in 'failsafe' NMD, which is independent of the EJC complex, while it does not participate in Staufen-mediated mRNA decay (SMD). During cell proliferation, the CBC complex is also involved in microRNAs (miRNAs) biogenesis via its interaction with SRRT/ARS2 and is required for miRNA-mediated RNA interference. The CBC complex also acts as a negative regulator of PARN, thereby acting as an inhibitor of mRNA deadenylation. In the CBC complex, NCBP1/CBP80 does not bind directly capped RNAs (m7GpppG-capped RNA) but is required to stabilize the movement of the N-terminal loop of NCBP2/CBP20 and lock the CBC into a high affinity cap-binding state with the cap structure. Associates with NCBP3 to form an alternative cap-binding complex (CBC) which plays a key role in mRNA export and is particularly important in cellular stress situations such as virus infections. The conventional CBC with NCBP2 binds both small nuclear RNA (snRNA) and messenger (mRNA) and is involved in their export from the nucleus whereas the alternative CBC with NCBP3 does not bind snRNA and associates only with mRNA thereby playing a role only in mRNA export. NCBP1/CBP80 is required for cell growth and viability. The polypeptide is Nuclear cap-binding protein subunit 1 (NCBP1) (Homo sapiens (Human)).